A 143-amino-acid chain; its full sequence is Nucleoside diphosphate kinase (143 aa).

Positions 11, 59, 87, 93, 104, and 114 each coordinate ATP. His-117 acts as the Pros-phosphohistidine intermediate in catalysis.

The protein belongs to the NDK family. In terms of assembly, homotetramer. Requires Mg(2+) as cofactor.

The protein localises to the cytoplasm. It catalyses the reaction a 2'-deoxyribonucleoside 5'-diphosphate + ATP = a 2'-deoxyribonucleoside 5'-triphosphate + ADP. The enzyme catalyses a ribonucleoside 5'-diphosphate + ATP = a ribonucleoside 5'-triphosphate + ADP. In terms of biological role, major role in the synthesis of nucleoside triphosphates other than ATP. The ATP gamma phosphate is transferred to the NDP beta phosphate via a ping-pong mechanism, using a phosphorylated active-site intermediate. The polypeptide is Nucleoside diphosphate kinase (Klebsiella pneumoniae (strain 342)).